The chain runs to 325 residues: Putative [LysW]-lysine/[LysW]-ornithine hydrolase (325 aa).

His66 contributes to the Zn(2+) binding site. Asp68 is a catalytic residue. A Zn(2+)-binding site is contributed by Asp90. The active-site Proton acceptor is the Glu117. Residues Glu118, Glu139, and His297 each contribute to the Zn(2+) site.

It belongs to the peptidase M20A family. LysK subfamily. It depends on Zn(2+) as a cofactor. The cofactor is Co(2+).

The protein resides in the cytoplasm. It catalyses the reaction [amino-group carrier protein]-C-terminal-gamma-(L-lysyl)-L-glutamate + H2O = [amino-group carrier protein]-C-terminal-L-glutamate + L-lysine. The catalysed reaction is [amino-group carrier protein]-C-terminal-gamma-(L-ornithyl)-L-glutamate + H2O = [amino-group carrier protein]-C-terminal-L-glutamate + L-ornithine. Its pathway is amino-acid biosynthesis; L-lysine biosynthesis via AAA pathway; L-lysine from L-alpha-aminoadipate (Thermus route): step 5/5. It participates in amino-acid biosynthesis; L-arginine biosynthesis. Functionally, catalyzes the release of L-lysine from [LysW]-gamma-L-lysine and the release of L-ornithine from [LysW]-L-ornithine. This Pyrococcus horikoshii (strain ATCC 700860 / DSM 12428 / JCM 9974 / NBRC 100139 / OT-3) protein is Putative [LysW]-lysine/[LysW]-ornithine hydrolase.